Consider the following 305-residue polypeptide: Taste receptor type 2 member 13 (305 aa).

At 1–7 (MGSSLYD) the chain is on the extracellular side. Residues 8-28 (ILTIVMIAEFIFGNVTNGFIV) form a helical membrane-spanning segment. Topologically, residues 29-42 (LTNCIAWLSKRTLS) are cytoplasmic. Residues 43-63 (FIGWIQLFLAISRVVLIWEML) form a helical membrane-spanning segment. The Extracellular portion of the chain corresponds to 64-88 (LAWLKYMKYSFSYLAGTELRVMMLT). Residues 89–109 (WVVSNHFSLWLATILSIFYLL) traverse the membrane as a helical segment. Residues 110 to 128 (KIASFSRPVFLYLKWRVKK) lie on the Cytoplasmic side of the membrane. A helical membrane pass occupies residues 129-149 (VLLLILLGNLIFLMFNILQIN). Residues 150–182 (THIEDWMDQYKRNITWDSRVNEFVGFSNLVLLE) lie on the Extracellular side of the membrane. Asn162 is a glycosylation site (N-linked (GlcNAc...) asparagine). A helical membrane pass occupies residues 183 to 203 (MIMFSVTPFTVALVSFILLIF). Residues 204 to 232 (SLWKHLQKMHLSSRGERDPSTKAHVNALR) are Cytoplasmic-facing. Residues 233 to 253 (IMVSFLLLYATYFISFFISLI) form a helical membrane-spanning segment. Topologically, residues 254–262 (PMAHKKGLD) are extracellular. A helical transmembrane segment spans residues 263–283 (LMFSLTVGLFYPSSHSFILIL). The Cytoplasmic portion of the chain corresponds to 284–305 (GHSNLRHSSCLVITYLRCKEKD).

This sequence belongs to the G-protein coupled receptor T2R family. Expressed in subsets of taste receptor cells of the tongue and palate epithelium and exclusively in gustducin-positive cells. Expressed in 15% taste bud cells in circumvallate and foliate papillae but only in 2% in fungiform papillae. Expressed in the duodenum, antrum and fundus (part of the stomach).

It localises to the membrane. Functionally, receptor that may play a role in the perception of bitterness and is gustducin-linked. May play a role in sensing the chemical composition of the gastrointestinal content. The activity of this receptor may stimulate alpha gustducin, mediate PLC-beta-2 activation and lead to the gating of TRPM5. In Rattus norvegicus (Rat), this protein is Taste receptor type 2 member 13 (Tas2r13).